The primary structure comprises 89 residues: Small ribosomal subunit protein uS15 (89 aa).

Belongs to the universal ribosomal protein uS15 family. In terms of assembly, part of the 30S ribosomal subunit. Forms a bridge to the 50S subunit in the 70S ribosome, contacting the 23S rRNA.

Its function is as follows. One of the primary rRNA binding proteins, it binds directly to 16S rRNA where it helps nucleate assembly of the platform of the 30S subunit by binding and bridging several RNA helices of the 16S rRNA. Forms an intersubunit bridge (bridge B4) with the 23S rRNA of the 50S subunit in the ribosome. The polypeptide is Small ribosomal subunit protein uS15 (Rhodospirillum centenum (strain ATCC 51521 / SW)).